The chain runs to 204 residues: GTP cyclohydrolase-2 (204 aa).

49–53 (RIHSE) lines the GTP pocket. The Zn(2+) site is built by Cys54, Cys65, and Cys67. GTP contacts are provided by residues Gln70, 92 to 94 (EGR), and Thr114. Asp126 acts as the Proton acceptor in catalysis. The Nucleophile role is filled by Arg128. 2 residues coordinate GTP: Thr149 and Lys154.

This sequence belongs to the GTP cyclohydrolase II family. Zn(2+) is required as a cofactor.

The catalysed reaction is GTP + 4 H2O = 2,5-diamino-6-hydroxy-4-(5-phosphoribosylamino)-pyrimidine + formate + 2 phosphate + 3 H(+). Its pathway is cofactor biosynthesis; riboflavin biosynthesis; 5-amino-6-(D-ribitylamino)uracil from GTP: step 1/4. Catalyzes the conversion of GTP to 2,5-diamino-6-ribosylamino-4(3H)-pyrimidinone 5'-phosphate (DARP), formate and pyrophosphate. The chain is GTP cyclohydrolase-2 from Shewanella baltica (strain OS223).